The following is a 399-amino-acid chain: Acetate kinase (399 aa).

Residue N10 coordinates Mg(2+). K17 serves as a coordination point for ATP. Residue R91 coordinates substrate. Residue D148 is the Proton donor/acceptor of the active site. ATP contacts are provided by residues 208–212 (HLGNG), 283–285 (DCR), and 331–335 (GIGEN). E385 contacts Mg(2+).

The protein belongs to the acetokinase family. As to quaternary structure, homodimer. The cofactor is Mg(2+). Mn(2+) serves as cofactor.

The protein resides in the cytoplasm. The catalysed reaction is acetate + ATP = acetyl phosphate + ADP. It functions in the pathway metabolic intermediate biosynthesis; acetyl-CoA biosynthesis; acetyl-CoA from acetate: step 1/2. Catalyzes the formation of acetyl phosphate from acetate and ATP. Can also catalyze the reverse reaction. The protein is Acetate kinase of Shewanella baltica (strain OS223).